A 79-amino-acid chain; its full sequence is Sec-independent protein translocase protein TatA (79 aa).

The helical transmembrane segment at 1 to 21 (MGGISIWQLLIVALIVVLLFG) threads the bilayer. Residues 43-79 (MSSEEDKKALEDTEAAKTAQTTQQATEKKPESNKEQA) are disordered. Basic and acidic residues predominate over residues 46 to 57 (EEDKKALEDTEA). Residues 58-67 (AKTAQTTQQA) show a composition bias toward low complexity. Over residues 68–79 (TEKKPESNKEQA) the composition is skewed to basic and acidic residues.

Belongs to the TatA/E family. As to quaternary structure, the Tat system comprises two distinct complexes: a TatABC complex, containing multiple copies of TatA, TatB and TatC subunits, and a separate TatA complex, containing only TatA subunits. Substrates initially bind to the TatABC complex, which probably triggers association of the separate TatA complex to form the active translocon.

It localises to the cell inner membrane. Its function is as follows. Part of the twin-arginine translocation (Tat) system that transports large folded proteins containing a characteristic twin-arginine motif in their signal peptide across membranes. TatA could form the protein-conducting channel of the Tat system. The polypeptide is Sec-independent protein translocase protein TatA (Shewanella baltica (strain OS223)).